Consider the following 318-residue polypeptide: Ribonuclease Z (318 aa).

Zn(2+) is bound by residues H63, H65, D67, H68, H142, D213, and H273. D67 (proton acceptor) is an active-site residue.

Belongs to the RNase Z family. In terms of assembly, homodimer. Zn(2+) serves as cofactor.

It catalyses the reaction Endonucleolytic cleavage of RNA, removing extra 3' nucleotides from tRNA precursor, generating 3' termini of tRNAs. A 3'-hydroxy group is left at the tRNA terminus and a 5'-phosphoryl group is left at the trailer molecule.. In terms of biological role, zinc phosphodiesterase, which displays some tRNA 3'-processing endonuclease activity. Probably involved in tRNA maturation, by removing a 3'-trailer from precursor tRNA. In Leuconostoc mesenteroides subsp. mesenteroides (strain ATCC 8293 / DSM 20343 / BCRC 11652 / CCM 1803 / JCM 6124 / NCDO 523 / NBRC 100496 / NCIMB 8023 / NCTC 12954 / NRRL B-1118 / 37Y), this protein is Ribonuclease Z.